We begin with the raw amino-acid sequence, 602 residues long: DNA mismatch repair protein MutL (602 aa).

The protein belongs to the DNA mismatch repair MutL/HexB family.

In terms of biological role, this protein is involved in the repair of mismatches in DNA. It is required for dam-dependent methyl-directed DNA mismatch repair. May act as a 'molecular matchmaker', a protein that promotes the formation of a stable complex between two or more DNA-binding proteins in an ATP-dependent manner without itself being part of a final effector complex. This Baumannia cicadellinicola subsp. Homalodisca coagulata protein is DNA mismatch repair protein MutL.